Here is a 192-residue protein sequence, read N- to C-terminus: Sarcoplasmic calcium-binding protein 1 (192 aa).

At Ala-1 the chain carries N-acetylalanine. 4 EF-hand domains span residues Trp-4–Ile-39, Ile-56–Gly-91, Ala-100–Phe-135, and Ala-136–Phe-171. Ca(2+)-binding residues include Asp-17, Asp-19, Asn-21, Asp-28, Asp-69, Asn-71, Asp-73, Glu-75, Glu-80, Asp-113, Asn-115, Asp-117, and Glu-124.

In terms of assembly, SCPs from crayfish, lobster, and shrimp are polymorphic dimers.

In terms of biological role, like parvalbumins, SCPs seem to be more abundant in fast contracting muscles, but no functional relationship can be established from this distribution. The protein is Sarcoplasmic calcium-binding protein 1 of Astacus leptodactylus (Turkish narrow-clawed crayfish).